The chain runs to 483 residues: Regulatory protein ViaA (483 aa).

This sequence belongs to the ViaA family. As to quaternary structure, homodimer. Interacts with RavA.

It localises to the cytoplasm. In terms of biological role, component of the RavA-ViaA chaperone complex, which may act on the membrane to optimize the function of some of the respiratory chains. ViaA stimulates the ATPase activity of RavA. The sequence is that of Regulatory protein ViaA from Escherichia fergusonii (strain ATCC 35469 / DSM 13698 / CCUG 18766 / IAM 14443 / JCM 21226 / LMG 7866 / NBRC 102419 / NCTC 12128 / CDC 0568-73).